A 1616-amino-acid polypeptide reads, in one-letter code: Protein Shroom2 (1616 aa).

The PDZ domain occupies 26 to 108 (LVEVQLSGGA…TLKLVVKRRS (83 aa)). Disordered stretches follow at residues 128-159 (ELAA…LSSS) and 183-229 (HPSS…KADT). Positions 150-159 (SSSSHDLSSS) are enriched in low complexity. Polar residues-rich tracts occupy residues 186–197 (SRLSVAKSNSSI) and 220–229 (PDHTLSKADT). Ser231 is modified (phosphoserine). The segment covering 247-259 (QGGRQAQAAGDPQ) has biased composition (low complexity). Disordered regions lie at residues 247–475 (QGGR…SGWQ), 502–678 (GALE…PLAG), 695–790 (TSFK…SEDT), 802–869 (EETS…LPRR), 881–1100 (KEQR…PSPA), 1115–1184 (PSVF…LTDK), 1268–1302 (AEPE…PGLS), and 1363–1389 (QRRK…VPAA). Pro residues predominate over residues 312–321 (SSPPPPPPPL). Phosphoserine occurs at positions 313 and 325. Positions 343 to 356 (AAAAQHFTALAQAQ) are enriched in low complexity. Basic and acidic residues predominate over residues 358–370 (RGDRRPELTDRPW). Low complexity predominate over residues 405–415 (SSRLQASLSSS). Ser413 is modified (phosphoserine). The ASD1 domain maps to 684 to 773 (LKEAQARVLR…SEPEKMNEVG (90 aa)). 2 stretches are compositionally biased toward basic and acidic residues: residues 754 to 770 (FTAE…EKMN) and 821 to 830 (IPRDKPERPR). A compositionally biased stretch (polar residues) spans 842-854 (WSRTTSLGDSLNA). Phosphoserine occurs at positions 851, 897, 921, 922, and 924. A Phosphothreonine modification is found at Thr925. Residues 926–958 (DHYKQEASVELRRQAGDPGEPREELPSAVRAEE) are compositionally biased toward basic and acidic residues. Ser974 carries the phosphoserine modification. Residues 975–994 (PGSQQHPPSQKAPNPPTFSE) show a composition bias toward polar residues. Ser1036 and Ser1039 each carry phosphoserine. Residues 1068-1077 (PKREPRRYRA) are compositionally biased toward basic and acidic residues. Positions 1159-1176 (LRLQTATMETSRSPSPQF) are enriched in polar residues. Residues Ser1171, Ser1173, and Ser1297 each carry the phosphoserine modification. The region spanning 1317 to 1611 (EELAREIVGK…QLKCLLDSLQ (295 aa)) is the ASD2 domain.

It belongs to the shroom family. In terms of assembly, interacts with F-actin. As to expression, abundant in retina and melanoma; also in brain, placenta, lung, kidney and pancreas.

It localises to the apical cell membrane. The protein localises to the cell junction. The protein resides in the tight junction. Its subcellular location is the cytoplasm. It is found in the cytoskeleton. Its function is as follows. May be involved in endothelial cell morphology changes during cell spreading. In the retinal pigment epithelium, may regulate the biogenesis of melanosomes and promote their association with the apical cell surface by inducing gamma-tubulin redistribution. The chain is Protein Shroom2 (SHROOM2) from Homo sapiens (Human).